A 95-amino-acid chain; its full sequence is Small ribosomal subunit protein bS6 (95 aa).

The protein belongs to the bacterial ribosomal protein bS6 family.

In terms of biological role, binds together with bS18 to 16S ribosomal RNA. In Corynebacterium diphtheriae (strain ATCC 700971 / NCTC 13129 / Biotype gravis), this protein is Small ribosomal subunit protein bS6.